The sequence spans 179 residues: Large ribosomal subunit protein bL17 (179 aa).

Residues 123–161 are compositionally biased toward basic and acidic residues; that stretch reads KEKDTKKKDDSKKSDDKKTSKKEAGFKSSKGESEHKKNT. Positions 123–179 are disordered; the sequence is KEKDTKKKDDSKKSDDKKTSKKEAGFKSSKGESEHKKNTDQVVDSSSNRRYNRVKGS. Residues 162–171 show a composition bias toward polar residues; that stretch reads DQVVDSSSNR.

The protein belongs to the bacterial ribosomal protein bL17 family. In terms of assembly, part of the 50S ribosomal subunit. Contacts protein L32.

The sequence is that of Large ribosomal subunit protein bL17 from Treponema denticola (strain ATCC 35405 / DSM 14222 / CIP 103919 / JCM 8153 / KCTC 15104).